We begin with the raw amino-acid sequence, 377 residues long: Chaperone protein DnaJ (377 aa).

The J domain maps to 4-69 (DYYEALGVTR…QKRAAYDRFG (66 aa)). The CR-type zinc-finger motif lies at 135–213 (GKTAQIRVPT…CHGQGRVTQE (79 aa)). Zn(2+)-binding residues include C148, C151, C165, C168, C187, C190, C201, and C204. CXXCXGXG motif repeat units lie at residues 148 to 155 (CDECSGSG), 165 to 172 (CTMCSGSG), 187 to 194 (CPGCNGRG), and 201 to 208 (CEKCHGQG).

This sequence belongs to the DnaJ family. In terms of assembly, homodimer. It depends on Zn(2+) as a cofactor.

The protein localises to the cytoplasm. Participates actively in the response to hyperosmotic and heat shock by preventing the aggregation of stress-denatured proteins and by disaggregating proteins, also in an autonomous, DnaK-independent fashion. Unfolded proteins bind initially to DnaJ; upon interaction with the DnaJ-bound protein, DnaK hydrolyzes its bound ATP, resulting in the formation of a stable complex. GrpE releases ADP from DnaK; ATP binding to DnaK triggers the release of the substrate protein, thus completing the reaction cycle. Several rounds of ATP-dependent interactions between DnaJ, DnaK and GrpE are required for fully efficient folding. Also involved, together with DnaK and GrpE, in the DNA replication of plasmids through activation of initiation proteins. The sequence is that of Chaperone protein DnaJ from Brucella canis (strain ATCC 23365 / NCTC 10854 / RM-666).